Here is a 193-residue protein sequence, read N- to C-terminus: Achaete-scute homolog 2 (193 aa).

3 disordered regions span residues M1–A27, R37–N56, and G118–S177. Positions A50–L102 constitute a bHLH domain. The span at A140–P150 shows a compositional bias: low complexity.

In terms of assembly, efficient DNA binding requires dimerization with another basic helix-loop-helix (bHLH) protein. Forms heterodimers with bHLH transcription factor TCF3. May not heterodimerise with bHLH protein HAND1. In terms of tissue distribution, expressed in the placenta at a stage between the first and second trimesters and when it matures, at about 32-36 weeks. Expressed in the extravillous trophoblasts, the intermediate trophoblasts, and at lower levels in the cytotrophoblasts and stroma of chorionic villi of the developing placenta. Expressed in follicular T-helper (Tfh) cells.

The protein resides in the nucleus. In terms of biological role, transcription factor. Binds to E-box motifs 5'-CANNTG-3' in the regulatory elements of target genes, probably as a heterodimer with another basic helix-loop-helix (bHLH) protein such as the transcription factor TCF3. May bind both open and closed chromatin, acting as a pioneer transcription factor to allow other factors to bind and activate lineage-specific genes. Required during post-implantation development for the generation of some differentiated trophoblast cell types. Transcriptional activity of ASCL2 may be antagonised in a subset of trophoblast cells by bHLH transcription factor HAND1, perhaps by competing for dimerization with other bHLH proteins. Involved in differentiation and function of follicular T-helper (Tfh) cells, thereby playing a role in germinal center responses; probably modulates expression of genes involved in Tfh cell function, such as BCL6. May also act as a suppressor of Th1-, Th2- and Th17-cell differentiation. Induces the formation of stem cells in intestinal crypts in vitro, synergistically activating transcription of target genes, such as SOX9, together with TCF4/beta-catenin. May form a bistable transcriptional switch, controlling expression of its own gene together with Wnt/R-spondin signaling, and thereby maintaining stem cell characteristics. Modulates expression of target genes, including perhaps down-regulating EGR1/Krox24 and chemokine CXCL10/Mob-1 and up-regulating CXCR4 and CDKN1C/p57kip2, in Schwann cells. May play a role in reducing proliferation of Schwann cells, perhaps acting via modulation of expression of CDKN1C. May be dispensable for blastocyst formation and later embryonic function. May be involved in the determination of neuronal precursors. This is Achaete-scute homolog 2 (ASCL2) from Homo sapiens (Human).